We begin with the raw amino-acid sequence, 184 residues long: ATP-dependent protease subunit HslV (184 aa).

Threonine 12 is an active-site residue. The Na(+) site is built by alanine 166, cysteine 169, and threonine 172.

This sequence belongs to the peptidase T1B family. HslV subfamily. As to quaternary structure, a double ring-shaped homohexamer of HslV is capped on each side by a ring-shaped HslU homohexamer. The assembly of the HslU/HslV complex is dependent on binding of ATP.

Its subcellular location is the cytoplasm. It carries out the reaction ATP-dependent cleavage of peptide bonds with broad specificity.. With respect to regulation, allosterically activated by HslU binding. Its function is as follows. Protease subunit of a proteasome-like degradation complex believed to be a general protein degrading machinery. The sequence is that of ATP-dependent protease subunit HslV from Brucella ovis (strain ATCC 25840 / 63/290 / NCTC 10512).